A 389-amino-acid chain; its full sequence is Protein CysO (389 aa).

Lys-127 bears the N6-(pyridoxal phosphate)lysine mark. Pyridoxal 5'-phosphate is bound by residues Asn-155, 261 to 265 (GTSGH), and Ser-341.

The protein belongs to the cysteine synthase/cystathionine beta-synthase family. In terms of assembly, homodimer. Pyridoxal 5'-phosphate is required as a cofactor.

It catalyses the reaction O-acetyl-L-serine + hydrogen sulfide = L-cysteine + acetate. The enzyme catalyses O-phospho-L-serine + hydrogen sulfide + H(+) = L-cysteine + phosphate. The catalysed reaction is L-homocysteine + L-serine = L,L-cystathionine + H2O. Its pathway is amino-acid biosynthesis; L-cysteine biosynthesis; L-cysteine from L-serine: step 2/2. In terms of biological role, cysteine synthase that can also catalyze the synthesis of S-sulfo-L-cysteine from thiosulfate and O(3)-acetyl-L-serine, as well as the sulfhydrylation of L-serine by sulfide. The polypeptide is Protein CysO (cysO) (Aeropyrum pernix (strain ATCC 700893 / DSM 11879 / JCM 9820 / NBRC 100138 / K1)).